The primary structure comprises 760 residues: ATP-dependent RNA helicase dbp7 (760 aa).

A compositionally biased stretch (basic and acidic residues) spans 23–34 (KLKGGTWRDRLS). The interval 23 to 129 (KLKGGTWRDR…EPVEDAKPTN (107 aa)) is disordered. The segment covering 38–47 (IAQHRTKNPR) has biased composition (basic residues). Residues 58–72 (KGPQNPNRIQVSSSR) show a composition bias toward polar residues. Basic and acidic residues predominate over residues 77-94 (QKTDADGDNEKSRHDNKQ). Positions 99 to 110 (FVSSLFSKNPTP) are enriched in polar residues. The Q motif motif lies at 137-166 (DTFTNLGLSPSLAAHLLTKLELKAPTGIQK). A Helicase ATP-binding domain is found at 170–372 (SQLLKEDSDA…EISLKDAVHI (203 aa)). Position 183–190 (183–190 (AETGSGKT)) interacts with ATP. The short motif at 308-311 (DEGD) is the DEAD box element. In terms of domain architecture, Helicase C-terminal spans 396 to 609 (QLKQSYAIVA…LTRTTAEDIL (214 aa)). Disordered stretches follow at residues 453–490 (YRDE…AVAF) and 692–760 (SKIN…FNLA). Residues 456 to 470 (ESEDEDEEKEDDDED) are compositionally biased toward acidic residues. Basic and acidic residues predominate over residues 701–716 (PGDKEAKKDYKAERNT). The span at 731 to 740 (QPSNDATSAA) shows a compositional bias: polar residues.

Belongs to the DEAD box helicase family. DDX31/DBP7 subfamily.

It is found in the nucleus. Its subcellular location is the nucleolus. It carries out the reaction ATP + H2O = ADP + phosphate + H(+). Its function is as follows. ATP-binding RNA helicase involved in the biogenesis of 60S ribosomal subunits and is required for the normal formation of 25S and 5.8S rRNAs. The chain is ATP-dependent RNA helicase dbp7 (dbp7) from Aspergillus oryzae (strain ATCC 42149 / RIB 40) (Yellow koji mold).